The sequence spans 212 residues: 3-demethoxyubiquinol 3-hydroxylase (212 aa).

Residues E61, E91, H94, E143, E175, and H178 each contribute to the Fe cation site.

This sequence belongs to the COQ7 family. Fe cation serves as cofactor.

It localises to the cell membrane. It carries out the reaction a 5-methoxy-2-methyl-3-(all-trans-polyprenyl)benzene-1,4-diol + AH2 + O2 = a 3-demethylubiquinol + A + H2O. It functions in the pathway cofactor biosynthesis; ubiquinone biosynthesis. Its function is as follows. Catalyzes the hydroxylation of 2-nonaprenyl-3-methyl-6-methoxy-1,4-benzoquinol during ubiquinone biosynthesis. This Paraburkholderia phytofirmans (strain DSM 17436 / LMG 22146 / PsJN) (Burkholderia phytofirmans) protein is 3-demethoxyubiquinol 3-hydroxylase.